The primary structure comprises 500 residues: Probable cytosol aminopeptidase (500 aa).

Residues Lys-265 and Asp-270 each contribute to the Mn(2+) site. Lys-277 is a catalytic residue. 3 residues coordinate Mn(2+): Asp-288, Asp-347, and Glu-349. Residue Arg-351 is part of the active site.

Belongs to the peptidase M17 family. The cofactor is Mn(2+).

It localises to the cytoplasm. The catalysed reaction is Release of an N-terminal amino acid, Xaa-|-Yaa-, in which Xaa is preferably Leu, but may be other amino acids including Pro although not Arg or Lys, and Yaa may be Pro. Amino acid amides and methyl esters are also readily hydrolyzed, but rates on arylamides are exceedingly low.. The enzyme catalyses Release of an N-terminal amino acid, preferentially leucine, but not glutamic or aspartic acids.. In terms of biological role, presumably involved in the processing and regular turnover of intracellular proteins. Catalyzes the removal of unsubstituted N-terminal amino acids from various peptides. The chain is Probable cytosol aminopeptidase from Rickettsia rickettsii (strain Iowa).